The sequence spans 261 residues: Early 39 kDa protein (261 aa).

A disordered region spans residues 215 to 261 (SYVPTPVSNKKRRAPPSAPKKIAKQRRDTKPPPTYVSDNTQDTNMSE). A compositionally biased stretch (polar residues) spans 250–261 (VSDNTQDTNMSE).

The chain is Early 39 kDa protein from Orgyia pseudotsugata multicapsid polyhedrosis virus (OpMNPV).